The chain runs to 592 residues: MAERRGPAGGGSGEVGGGRRAGGDRCPRRPPALPLLLLLWAAALPAGGQPAAQPAALSERGISIPDHGYCQPISIPLCTDIAYNQTIMPNLLGHTNQEDAGLEVHQFYPLVKVQCSAELKFFLCSMYAPVCTVLEQALPPCRSLCERARQGCEALMNKFGFQWPDTLRCEKFPVHGAGELCVGQNASERGTPTPALRPESWTSNPHRGGGAGGSGPGEARGRFSCPRALKVPSYLNYRFLGEKDCGAPCEPGRLYGLMYFGPEELRFSRTWIGIWSVLCCASTLFTVLTYLVDMKRFSYPERPIIFLSGCYTAVAVAYIAGFLLEERVVCNERFAEDGSRTVAQGTKREGCTILFMMLYFFGMASSIWWVILSLTWFLAAGMKWGHEAIEANSQYFHLAAWAVPAIKTITILALGQVDGDVLSGVCFVGINNVDALRGFVLAPLFVYLFIGTSFLLAGFVSLFRIRTIMKHDGTKTEKLEKLMVRIGIFSVLYTVPATIVIACYFYEQAFREQWERSWVTQSCKSYAIPCPNNHSSHHPPMSPDFTVFMIKYLMTLIVGITSGFWIWSGKTLNSWRKFYTRLTNSKQGETTV.

Residues M1–C26 are disordered. A signal peptide spans M1–G48. Residues P7–R20 are compositionally biased toward gly residues. Topologically, residues Q49 to W271 are extracellular. In terms of domain architecture, FZ spans P65–Q184. Intrachain disulfides connect C70-C131, C78-C124, C115-C152, C141-C181, and C145-C169. N-linked (GlcNAc...) asparagine glycosylation is present at N84. N185 carries an N-linked (GlcNAc...) asparagine glycan. Positions N185 to A219 are disordered. Positions R207 to E218 are enriched in gly residues. The chain crosses the membrane as a helical span at residues I272–V292. The Cytoplasmic portion of the chain corresponds to D293–P303. Residues I304–L324 form a helical membrane-spanning segment. Topologically, residues E325–C351 are extracellular. A helical transmembrane segment spans residues T352–L372. The Cytoplasmic segment spans residues S373–Q394. Residues Y395–G415 traverse the membrane as a helical segment. Over Q416 to G438 the chain is Extracellular. The chain crosses the membrane as a helical span at residues F439–F459. Residues V460–R485 are Cytoplasmic-facing. Residues I486–Y506 traverse the membrane as a helical segment. The Extracellular segment spans residues E507–T546. A glycan (N-linked (GlcNAc...) asparagine) is linked at N533. A helical membrane pass occupies residues V547–W567. The Cytoplasmic segment spans residues S568–V592. The short motif at K570–W575 is the Lys-Thr-X-X-X-Trp motif, mediates interaction with the PDZ domain of Dvl family members element. The PDZ-binding signature appears at T590–V592.

Belongs to the G-protein coupled receptor Fz/Smo family. Expressed in the lens, otic placode (medial wall of the vesicle) and in epibranchial placode. Also expressed in the developing somites (dermomyotome).

It is found in the cell membrane. Its function is as follows. Receptor for Wnt proteins. Functions in the canonical Wnt/beta-catenin signaling pathway. The canonical Wnt/beta-catenin signaling pathway leads to the activation of disheveled proteins, inhibition of GSK-3 kinase, nuclear accumulation of beta-catenin and activation of Wnt target genes. A second signaling pathway involving PKC and calcium fluxes has been seen for some family members, but it is not yet clear if it represents a distinct pathway or if it can be integrated in the canonical pathway, as PKC seems to be required for Wnt-mediated inactivation of GSK-3 kinase. Both pathways seem to involve interactions with G-proteins. May be involved in transduction and intercellular transmission of polarity information during tissue morphogenesis and/or in differentiated tissues. The sequence is that of Frizzled-1 (FZD1) from Gallus gallus (Chicken).